Consider the following 475-residue polypeptide: Fez family zinc finger protein 1 (475 aa).

The Engrailed homology 1 repressor motif lies at 28–43; the sequence is PLAFSIERIMARTPEP. 6 C2H2-type zinc fingers span residues 260–282, 288–310, 316–338, 344–366, 372–394, and 400–423; these read FTCE…MPVH, FVCK…KIIH, HKCN…TRIH, FVCE…KLTH, FKCN…MHTH, and FTCP…RKLH. Residues 425 to 475 are disordered; it reads SSLGLTRTPTGEPSSDPPPQLQQPPPAPLPPLQPTLPPPGPLPSGLHQGHQ. The span at 427–437 shows a compositional bias: polar residues; the sequence is LGLTRTPTGEP. Pro residues predominate over residues 439-466; the sequence is SDPPPQLQQPPPAPLPPLQPTLPPPGPL.

It belongs to the krueppel C2H2-type zinc-finger protein family.

The protein resides in the nucleus. Functionally, transcription repressor. Involved in the axonal projection and proper termination of olfactory sensory neurons (OSN). Plays a role in rostro-caudal patterning of the diencephalon and in prethalamic formation. Expression is required in OSN to cell-autonomously regulate OSN axon projections. Regulates non-cell-autonomously the layer formation of the olfactory bulb development and the interneurons. May be required for correct rostral migration of the interneuron progenitors. The protein is Fez family zinc finger protein 1 (Fezf1) of Mus musculus (Mouse).